Reading from the N-terminus, the 199-residue chain is Probable molybdenum cofactor guanylyltransferase (199 aa).

GTP-binding positions include 6-8 (LAG), Lys18, Asp65, and Asp97. Residue Asp97 coordinates Mg(2+).

It belongs to the MobA family. Mg(2+) is required as a cofactor.

Its subcellular location is the cytoplasm. The enzyme catalyses Mo-molybdopterin + GTP + H(+) = Mo-molybdopterin guanine dinucleotide + diphosphate. Transfers a GMP moiety from GTP to Mo-molybdopterin (Mo-MPT) cofactor (Moco or molybdenum cofactor) to form Mo-molybdopterin guanine dinucleotide (Mo-MGD) cofactor. This is Probable molybdenum cofactor guanylyltransferase from Staphylococcus aureus (strain Mu50 / ATCC 700699).